The primary structure comprises 175 residues: Orotate phosphoribosyltransferase (175 aa).

5-phospho-alpha-D-ribose 1-diphosphate-binding positions include Arg89, Lys90, Lys93, and 115-123 (EDIATTGQS). The orotate site is built by Thr119 and Arg147.

It belongs to the purine/pyrimidine phosphoribosyltransferase family. PyrE subfamily. Homodimer. Requires Mg(2+) as cofactor.

The catalysed reaction is orotidine 5'-phosphate + diphosphate = orotate + 5-phospho-alpha-D-ribose 1-diphosphate. It participates in pyrimidine metabolism; UMP biosynthesis via de novo pathway; UMP from orotate: step 1/2. Its function is as follows. Catalyzes the transfer of a ribosyl phosphate group from 5-phosphoribose 1-diphosphate to orotate, leading to the formation of orotidine monophosphate (OMP). The polypeptide is Orotate phosphoribosyltransferase (Halobacterium salinarum (strain ATCC 700922 / JCM 11081 / NRC-1) (Halobacterium halobium)).